The chain runs to 242 residues: Anti-Pycsar protein Apyc1 (242 aa).

Residues 17–216 (FNNNALIEQD…EMQSIIKLMH (200 aa)) form a beta-lactamase-like region. The Zn(2+) site is built by H59, H61, D63, H64, H142, D162, and H216.

The protein belongs to the anti-Pycsar protein Apyc1 family. In terms of assembly, homodimer. It depends on Zn(2+) as a cofactor.

It carries out the reaction 3',5'-cyclic CMP + H2O = CMP + H(+). The enzyme catalyses 3',5'-cyclic UMP + H2O = UMP + H(+). In terms of biological role, counteracts the endogenous Pycsar antiviral defense system. Phosphodiesterase that enables metal-dependent hydrolysis of host cyclic nucleotide Pycsar defense signals such as cCMP and cUMP. In Saccharibacillus brassicae, this protein is Anti-Pycsar protein Apyc1.